Consider the following 203-residue polypeptide: MSRYRGPRLKIVRRLGDLPGFTNKIQKRQASTQNKGKKTAKKRLSQYSIRLQEKQKLRYNYGVTERQLLLYVRKARRIKGSTGQILLQQLEMRLDNIIYRLGMAPTIANARQLVNHGHIVVNDRIVTIPSYRCKPKDIISVRNNSTSRNVITNNLSFSDSRLPPHLSFKKESLVALVNGLVDRQWIPLNINELLVVEYYSRMA.

An S4 RNA-binding domain is found at Met92–Val150.

Belongs to the universal ribosomal protein uS4 family. Part of the 30S ribosomal subunit. Contacts protein S5. The interaction surface between S4 and S5 is involved in control of translational fidelity.

It localises to the plastid. The protein resides in the chloroplast. Functionally, one of the primary rRNA binding proteins, it binds directly to 16S rRNA where it nucleates assembly of the body of the 30S subunit. Its function is as follows. With S5 and S12 plays an important role in translational accuracy. This chain is Small ribosomal subunit protein uS4c (rps4), found in Chlorokybus atmophyticus (Soil alga).